The following is a 382-amino-acid chain: S-adenosylmethionine synthase (382 aa).

Histidine 15 lines the ATP pocket. Aspartate 17 contacts Mg(2+). Glutamate 43 contacts K(+). L-methionine contacts are provided by glutamate 56 and glutamine 99. The segment at 99–109 (QSGDIAQGVDR) is flexible loop. ATP is bound by residues 164-166 (DAK), 230-231 (KF), aspartate 239, 245-246 (RK), alanine 262, and lysine 266. Aspartate 239 provides a ligand contact to L-methionine. L-methionine is bound at residue lysine 270.

Belongs to the AdoMet synthase family. In terms of assembly, homotetramer; dimer of dimers. The cofactor is Mg(2+). K(+) serves as cofactor.

The protein localises to the cytoplasm. The enzyme catalyses L-methionine + ATP + H2O = S-adenosyl-L-methionine + phosphate + diphosphate. It participates in amino-acid biosynthesis; S-adenosyl-L-methionine biosynthesis; S-adenosyl-L-methionine from L-methionine: step 1/1. Catalyzes the formation of S-adenosylmethionine (AdoMet) from methionine and ATP. The overall synthetic reaction is composed of two sequential steps, AdoMet formation and the subsequent tripolyphosphate hydrolysis which occurs prior to release of AdoMet from the enzyme. The sequence is that of S-adenosylmethionine synthase from Dichelobacter nodosus (strain VCS1703A).